Here is a 317-residue protein sequence, read N- to C-terminus: Glucokinase (317 aa).

Position 6–12 (Gly6–Thr12) interacts with ATP.

The protein belongs to the ROK (NagC/XylR) family. Homooligomer (possibly a homotetramer). Alternatively, it may form a heterotetramer of two glucokinase subunits with two ORF2 (AC P40182) proteins.

It is found in the cytoplasm. The catalysed reaction is D-glucose + ATP = D-glucose 6-phosphate + ADP + H(+). In terms of biological role, a probable glucose kinase. Required for glucose repression of many different genes, restores glucose kinase activity in E.coli glk mutants. The polypeptide is Glucokinase (glkA) (Streptomyces coelicolor (strain ATCC BAA-471 / A3(2) / M145)).